The sequence spans 343 residues: Geranylgeranyl pyrophosphate synthase 1 (343 aa).

Lys43, Arg46, and His75 together coordinate isopentenyl diphosphate. Mg(2+)-binding residues include Asp82 and Asp86. Residue Arg91 coordinates dimethylallyl diphosphate. Isopentenyl diphosphate is bound at residue Arg92. Dimethylallyl diphosphate is bound by residues Lys169, Thr170, and Gln212. Residue Asp215 coordinates Mg(2+). Positions 219, 229, and 239 each coordinate dimethylallyl diphosphate.

Belongs to the FPP/GGPP synthase family. It depends on Mg(2+) as a cofactor.

It catalyses the reaction isopentenyl diphosphate + dimethylallyl diphosphate = (2E)-geranyl diphosphate + diphosphate. The catalysed reaction is isopentenyl diphosphate + (2E)-geranyl diphosphate = (2E,6E)-farnesyl diphosphate + diphosphate. The enzyme catalyses isopentenyl diphosphate + (2E,6E)-farnesyl diphosphate = (2E,6E,10E)-geranylgeranyl diphosphate + diphosphate. Geranylgeranyl pyrophosphate synthase; part of the gene cluster 4 that mediates the biosynthesis of an isoprenoid secondary metabolite. The polypeptide is Geranylgeranyl pyrophosphate synthase 1 (GGS1) (Zymoseptoria tritici (strain CBS 115943 / IPO323) (Speckled leaf blotch fungus)).